A 2282-amino-acid polypeptide reads, in one-letter code: Zonadhesin (2282 aa).

2 MAM domains span residues 1 to 147 (MFFA…PCGE) and 150 to 315 (PQCV…TCHV). The Extracellular segment spans residues 1–2235 (MFFATGRASA…VLLPPKPDTS (2235 aa)). Asn-112 and Asn-272 each carry an N-linked (GlcNAc...) asparagine glycan. Residues 315-498 (VPVPPVIPIK…STTTTPSPTT (184 aa)) form a 26 X approximate heptapeptide repeats (mucin-like domain) region. The segment covering 333-356 (PTVPAEGTTEPPEGTIELPEGTTK) has biased composition (low complexity). The tract at residues 333–495 (PTVPAEGTTE…TTLSTTTTPS (163 aa)) is disordered. A compositionally biased stretch (acidic residues) spans 360-369 (ETTELPEEIT). A compositionally biased stretch (pro residues) spans 379–398 (TEPPTVPTEPPTVPTEPPTV). Composition is skewed to low complexity over residues 399-420 (PTEK…TSIP) and 427-495 (PTEK…TTPS). A TIL 1 domain is found at 501–550 (CPANAHYESCACPASCKHPKASCKPPCQPGCVCDPGLVFSNNSCIKASSC). N-linked (GlcNAc...) asparagine glycans are attached at residues Asn-541 and Asn-569. One can recognise a VWFC 1 domain in the interval 551 to 605 (PCLYNNNNYEPEAEWFSPNCTELCHCWPGGRIECQISQCKTHTKCQLKNGQYECQ). The VWFD 1 domain maps to 610–787 (ATCFVYGDPH…WAQDEDKECQ (178 aa)). Disulfide bonds link Cys-612/Cys-747 and Cys-634/Cys-786. Residues 881-934 (CPPNSRYSLCTSPCPKTCHTGYVGMPCPEQCLEGCECNPGFILSGLECVPSAQC) form the TIL 2 domain. Residues 935–990 (GCLDPSRGYFKVGEQWFKSDCKQLCICEGSNQIRCQPWKCGPHEVCSQQSGIYGCH) enclose the VWFC 2 domain. A VWFD 2 domain is found at 995–1176 (ATCSASGDPH…LEEGSETGCF (182 aa)). 2 disulfides stabilise this stretch: Cys-997-Cys-1136 and Cys-1019-Cys-1175. N-linked (GlcNAc...) asparagine glycosylation is found at Asn-1141, Asn-1259, Asn-1270, Asn-1355, Asn-1467, and Asn-1483. Positions 1267–1322 (CPPNSSYSPCGSPCPGTCLSLNHPKDCPITLPCVEGCECQNGYILSGTSCVPLNQC) constitute a TIL 3 domain. The 57-residue stretch at 1323–1379 (GCTDFEGSYHLVRESWYTDNTCSRLCTCSLHNNITCRQTACKPGQQCWAVDGLLRCR) folds into the VWFC 3 domain. The 181-residue stretch at 1384-1564 (GVCQVTGDSR…KDNNIDPNCQ (181 aa)) folds into the VWFD 3 domain. Disulfide bonds link Cys-1386-Cys-1525 and Cys-1408-Cys-1563. A disordered region spans residues 1561-1588 (PNCQKSQEGKGKPQEEQGPSGSSKKASC). Over residues 1577–1586 (QGPSGSSKKA) the composition is skewed to polar residues. Asn-1662 carries an N-linked (GlcNAc...) asparagine glycan. The region spanning 1670–1726 (CPAYSTYTNCLPSCSPSCFDPDGRCEGARAPSSCAEGCTCQPGYVLSKNKCVAKDQC) is the TIL 4 domain. Positions 1727 to 1782 (SCRDAQGGSIPSGKSWVSSGCSQKCACTEGSIQCRAFHCPSRSHCKLNSNGNSNCV) constitute a VWFC 4 domain. A VWFD 4 domain is found at 1787-1963 (DQCSIFGGPH…SWEVKTEDSV (177 aa)). Cys-1789 and Cys-1926 are joined by a disulfide. Residue Asn-1997 is glycosylated (N-linked (GlcNAc...) asparagine). The 54-residue stretch at 2076–2129 (CPANTVYQSCMTPCPESCANLAAPRDCEGPCVEGCASLPGYAFSGAQSLPLANC) folds into the TIL 5 domain. Positions 2130–2184 (GCTSNGIYYQLGHSFVTADCSQRCTCASSGVLLCEPFSCRPGESCTLGNLTRGCF) constitute a VWFC 5 domain. A glycan (N-linked (GlcNAc...) asparagine) is linked at Asn-2178. An EGF-like domain is found at 2185–2221 (RESPCLRNPCQNDGRCREQGTSFTCECEPGYGGHLCT). Disulfide bonds link Cys-2189–Cys-2200, Cys-2194–Cys-2209, and Cys-2211–Cys-2220. The chain crosses the membrane as a helical span at residues 2236–2256 (NLVAILLGMLVSLVVTVPVLA). At 2257–2282 (RKCVSRKRRRWREKTQSEPRSAPGRR) the chain is on the cytoplasmic side.

As to quaternary structure, probably forms covalent oligomers.

Its subcellular location is the cell membrane. Functionally, binds in a species-specific manner to the zona pellucida of the egg. May be involved in gamete recognition and/or signaling. The sequence is that of Zonadhesin (ZAN) from Oryctolagus cuniculus (Rabbit).